The following is a 792-amino-acid chain: Leucine--tRNA ligase (792 aa).

Positions Pro-39–His-50 match the 'HIGH' region motif. Positions Lys-569–Ser-573 match the 'KMSKS' region motif. Lys-572 provides a ligand contact to ATP.

Belongs to the class-I aminoacyl-tRNA synthetase family.

It localises to the cytoplasm. It carries out the reaction tRNA(Leu) + L-leucine + ATP = L-leucyl-tRNA(Leu) + AMP + diphosphate. The sequence is that of Leucine--tRNA ligase from Mycoplasma genitalium (strain ATCC 33530 / DSM 19775 / NCTC 10195 / G37) (Mycoplasmoides genitalium).